The primary structure comprises 316 residues: 4-diphosphocytidyl-2-C-methyl-D-erythritol kinase (316 aa).

Lys-14 is a catalytic residue. Position 96–106 (96–106) interacts with ATP; sequence PMGAGLGGGSS. Residue Asp-138 is part of the active site.

Belongs to the GHMP kinase family. IspE subfamily.

It carries out the reaction 4-CDP-2-C-methyl-D-erythritol + ATP = 4-CDP-2-C-methyl-D-erythritol 2-phosphate + ADP + H(+). Its pathway is isoprenoid biosynthesis; isopentenyl diphosphate biosynthesis via DXP pathway; isopentenyl diphosphate from 1-deoxy-D-xylulose 5-phosphate: step 3/6. Its function is as follows. Catalyzes the phosphorylation of the position 2 hydroxy group of 4-diphosphocytidyl-2C-methyl-D-erythritol. The chain is 4-diphosphocytidyl-2-C-methyl-D-erythritol kinase from Solibacter usitatus (strain Ellin6076).